The following is a 207-amino-acid chain: 2,3-bisphosphoglycerate-dependent phosphoglycerate mutase (207 aa).

Residues 10–17 (RHGQSEWN), 23–24 (TG), R62, 89–92 (ERDY), K100, 116–117 (RR), and 160–161 (GN) each bind substrate. H11 (tele-phosphohistidine intermediate) is an active-site residue. The active-site Proton donor/acceptor is E89.

The protein belongs to the phosphoglycerate mutase family. BPG-dependent PGAM subfamily. Homodimer.

The catalysed reaction is (2R)-2-phosphoglycerate = (2R)-3-phosphoglycerate. It participates in carbohydrate degradation; glycolysis; pyruvate from D-glyceraldehyde 3-phosphate: step 3/5. Catalyzes the interconversion of 2-phosphoglycerate and 3-phosphoglycerate. The sequence is that of 2,3-bisphosphoglycerate-dependent phosphoglycerate mutase from Bradyrhizobium sp. (strain ORS 278).